The chain runs to 576 residues: 3-hydroxy-3-methylglutaryl coenzyme A reductase 1 (576 aa).

Residues methionine 1 to arginine 35 are disordered. 2 consecutive transmembrane segments (helical) span residues alanine 42 to alanine 62 and alanine 89 to valine 109. The Charge relay system role is filled by glutamate 255. The N-linked (GlcNAc...) asparagine glycan is linked to asparagine 319. Catalysis depends on charge relay system residues lysine 387 and aspartate 463. The chain crosses the membrane as a helical span at residues leucine 532–isoleucine 552. The Proton donor role is filled by histidine 561. A glycan (N-linked (GlcNAc...) asparagine) is linked at asparagine 565.

The protein belongs to the HMG-CoA reductase family. As to expression, expressed in trichomes, leaves, flowers, roots and stems.

Its subcellular location is the endoplasmic reticulum membrane. The protein resides in the plastid. The protein localises to the chloroplast membrane. It localises to the peroxisome membrane. The catalysed reaction is (R)-mevalonate + 2 NADP(+) + CoA = (3S)-3-hydroxy-3-methylglutaryl-CoA + 2 NADPH + 2 H(+). The protein operates within metabolic intermediate biosynthesis; (R)-mevalonate biosynthesis; (R)-mevalonate from acetyl-CoA: step 3/3. In terms of biological role, catalyzes the synthesis of mevalonate, the specific precursor of all isoprenoid compounds present in plants. Component of the triterpene saponins (e.g. ginsenosides or panaxosides) and phytosterols biosynthetic pathways. Promotes triterpenes accumulation in roots. This is 3-hydroxy-3-methylglutaryl coenzyme A reductase 1 from Cannabis sativa (Hemp).